The sequence spans 478 residues: JmjC domain-containing histone demethylation protein 1 (478 aa).

Residues 5-68 (SESCPLCKVH…IYHCPECVPK (64 aa)) form a PHD-type zinc finger. Residues 217 to 383 (SDVAKLGVDF…MQLKINEIER (167 aa)) enclose the JmjC domain. Residue Thr-266 participates in substrate binding. Positions 269 and 271 each coordinate Fe cation. Lys-286 provides a ligand contact to substrate. A Fe cation-binding site is contributed by His-351.

Belongs to the JHDM1 histone demethylase family. Fe(2+) is required as a cofactor.

It is found in the nucleus. The catalysed reaction is N(6),N(6)-dimethyl-L-lysyl(36)-[histone H3] + 2 2-oxoglutarate + 2 O2 = L-lysyl(36)-[histone H3] + 2 formaldehyde + 2 succinate + 2 CO2. Functionally, histone demethylase that specifically demethylates 'Lys-36' of histone H3, thereby playing a central role in histone code. The sequence is that of JmjC domain-containing histone demethylation protein 1 (JHD1) from Candida albicans (strain SC5314 / ATCC MYA-2876) (Yeast).